Reading from the N-terminus, the 42-residue chain is Lanthionine-containing peptide SapB precursor RamS (42 aa).

A propeptide spanning residues M1–E21 is cleaved from the precursor. Positions M1–E21 are disordered. 2 cross-links (lanthionine (Ser-Cys)) span residues S24 to C31 and S34 to C41. 2,3-didehydroalanine (Ser) occurs at positions 27 and 37.

The protein belongs to the lanthionine-containing morphogen family. Maturation involves the enzymatic conversion of Ser into dehydrated AA and the formation of thioether bonds with cysteine, probably by RamC. This is followed by membrane translocation and cleavage of the modified precursor. The RamS precursor protein (detected by an anti-propeptide antibody and by a C-terminal His-tag) is detected from at least 16 hours post-germination; its apparent molecular weight decreases starting from about 34 hours, when its probable modifying enzyme ramC is transcribed. Surfactin, a B.subtilis cyclic lipopeptide antibiotic which prevents aerial hyphae formation in S.coelicolor, decreases localization of RamS precursor protein to the cell membrane, suggesting that processing only occurs at the cell membrane.

It localises to the cell membrane. It is found in the secreted. The protein localises to the spore wall. In terms of biological role, stably accumulated precursor of SapB. Lanthionine-containing peptide devoid of antibiotic properties. A surface active peptide involved in the efficient formation of aerial mycelium when cells are grown in rich media. Has an overlapping function with the surface-active chaplin proteins; chaplins are essential on minimal medium while on rich medium both chaplins and SapB are required for efficient aerial hyphae formation. Required under conditions of high osmolarity where it may change the physical properties of the chaplin layer to allow hyphae to grow into air. Suggested to self-assemble at air-water interfaces, thus providing a film of surfactant through which nascent aerial hyphae can emerge; the aerial hyphae differentiate further into spores. Application to bald mutants (bld, unable to make aerial hyphae) restores hyphae growth. Application to chaplin negative mutants as well as ramC-ramS-ramA-ramB and ramR deletions also restores aerial hyphae growth and sporulation. Reduces surface tension of water from 72 to 30 mJ/m(2). The sequence is that of Lanthionine-containing peptide SapB precursor RamS (ramS) from Streptomyces coelicolor (strain ATCC BAA-471 / A3(2) / M145).